The sequence spans 579 residues: Thiol:disulfide interchange protein DsbD (579 aa).

Positions 1 to 16 are cleaved as a signal peptide; that stretch reads MKKLFLFFTLIFTAFA. 2 disulfides stabilise this stretch: Cys124–Cys129 and Cys193–Cys315. The next 8 helical transmembrane spans lie at 178–198, 230–250, 254–274, 296–316, 337–357, 376–396, 397–417, and 420–440; these read IFGF…LPML, LTYT…QIAL, YVMI…FGLF, GAFG…SPCT, AATL…ITLF, FGFV…PEVW, EPRL…LQMS, and GFGY…VQPL. Residues 449 to 579 enclose the Thioredoxin domain; the sequence is TTTQSAVENK…AFSNWLKALH (131 aa). A disulfide bond links Cys495 and Cys498.

The protein belongs to the thioredoxin family. DsbD subfamily.

The protein resides in the cell inner membrane. The catalysed reaction is [protein]-dithiol + NAD(+) = [protein]-disulfide + NADH + H(+). The enzyme catalyses [protein]-dithiol + NADP(+) = [protein]-disulfide + NADPH + H(+). Functionally, required to facilitate the formation of correct disulfide bonds in some periplasmic proteins and for the assembly of the periplasmic c-type cytochromes. Acts by transferring electrons from cytoplasmic thioredoxin to the periplasm. This transfer involves a cascade of disulfide bond formation and reduction steps. The sequence is that of Thiol:disulfide interchange protein DsbD from Haemophilus influenzae (strain PittEE).